The sequence spans 127 residues: Large ribosomal subunit protein bL12 (127 aa).

The protein belongs to the bacterial ribosomal protein bL12 family. In terms of assembly, homodimer. Part of the ribosomal stalk of the 50S ribosomal subunit. Forms a multimeric L10(L12)X complex, where L10 forms an elongated spine to which 2 to 4 L12 dimers bind in a sequential fashion. Binds GTP-bound translation factors.

Forms part of the ribosomal stalk which helps the ribosome interact with GTP-bound translation factors. Is thus essential for accurate translation. The protein is Large ribosomal subunit protein bL12 of Rhizobium etli (strain ATCC 51251 / DSM 11541 / JCM 21823 / NBRC 15573 / CFN 42).